The following is a 97-amino-acid chain: RNA-binding protein Hfq (97 aa).

Residues 10–70 (DPFLNALRKE…ISTIVPARSV (61 aa)) enclose the Sm domain. The tract at residues 74–97 (HENRPQAAPTSTLVQVETVQQPAE) is disordered. Residues 81–97 (APTSTLVQVETVQQPAE) are compositionally biased toward polar residues.

Belongs to the Hfq family. As to quaternary structure, homohexamer.

Its function is as follows. RNA chaperone that binds small regulatory RNA (sRNAs) and mRNAs to facilitate mRNA translational regulation in response to envelope stress, environmental stress and changes in metabolite concentrations. Also binds with high specificity to tRNAs. This is RNA-binding protein Hfq from Neisseria meningitidis serogroup A / serotype 4A (strain DSM 15465 / Z2491).